The primary structure comprises 460 residues: tRNA modification GTPase MnmE (460 aa).

(6S)-5-formyl-5,6,7,8-tetrahydrofolate-binding residues include arginine 24, glutamate 81, and lysine 121. The TrmE-type G domain maps to 218-384 (GLVVAIAGPP…MVEALAGFAA (167 aa)). GTP is bound by residues 228–233 (NVGKST), 247–253 (SPHAGTT), and 272–275 (DTAG). Serine 232 and threonine 253 together coordinate Mg(2+). Lysine 460 serves as a coordination point for (6S)-5-formyl-5,6,7,8-tetrahydrofolate.

The protein belongs to the TRAFAC class TrmE-Era-EngA-EngB-Septin-like GTPase superfamily. TrmE GTPase family. Homodimer. Heterotetramer of two MnmE and two MnmG subunits. Requires K(+) as cofactor.

It is found in the cytoplasm. In terms of biological role, exhibits a very high intrinsic GTPase hydrolysis rate. Involved in the addition of a carboxymethylaminomethyl (cmnm) group at the wobble position (U34) of certain tRNAs, forming tRNA-cmnm(5)s(2)U34. The sequence is that of tRNA modification GTPase MnmE from Rhodopseudomonas palustris (strain HaA2).